A 282-amino-acid polypeptide reads, in one-letter code: Globin-related protein glb-13 (282 aa).

The segment at 1–46 (MGQENSKCPHQSLAEKRYKVERPKTKKVSSGSATERCLSTQSDEKN) is disordered. A compositionally biased stretch (basic and acidic residues) spans 13 to 23 (LAEKRYKVERP). Over residues 28–41 (VSSGSATERCLSTQ) the composition is skewed to polar residues. One can recognise a Globin domain in the interval 100-249 (FLTRRERILL…IISFMRRGFD (150 aa)). Heme b is bound by residues H162 and H194.

It belongs to the globin family.

Its function is as follows. Involved in oxidative stress resistance. The sequence is that of Globin-related protein glb-13 from Caenorhabditis elegans.